Here is a 66-residue protein sequence, read N- to C-terminus: Large ribosomal subunit protein bL35 (66 aa).

Positions 24-43 are enriched in basic residues; the sequence is HKKAGKRHNLSKKSKARKRR. Residues 24–44 form a disordered region; that stretch reads HKKAGKRHNLSKKSKARKRRL.

It belongs to the bacterial ribosomal protein bL35 family.

In Dictyoglomus thermophilum (strain ATCC 35947 / DSM 3960 / H-6-12), this protein is Large ribosomal subunit protein bL35.